The following is a 444-amino-acid chain: MDPLNLSWYDDDPESRNWSRPFNGSEGKADRPPYNYYAMLLTLLIFVIVFGNVLVCMAVSREKALQTTTNYLIVSLAVADLLVATLVMPWVVYLEVVGEWKFSRIHCDIFVTLDVMMCTASILNLCAISIDRYTAVAMPMLYNTRYSSKRRVTVMIAIVWVLSFTISCPMLFGLNNTDQNECIIANPAFVVYSSIVSFYVPFIVTLLVYIKIYIVLRRRRKRVNTKRSSRAFRANLKAPLKGNCTHPEDMKLCTVIMKSNGSFPVNRRRVEAARRAQELEMEMLSSTSPPERTRYSPIPPSHHQLTLPDPSHHGLHSTPDSPAKPEKNGHAKTVNPKIAKIFEIQSMPNGKTRTSLKTMSRRKLSQQKEKKATQMLAIVLGVFIICWLPFFITHILNIHCDCNIPPVLYSAFTWLGYVNSAVNPIIYTTFNIEFRKAFLKILHC.

The Extracellular portion of the chain corresponds to 1-37; sequence MDPLNLSWYDDDPESRNWSRPFNGSEGKADRPPYNYY. N5, N17, and N23 each carry an N-linked (GlcNAc...) asparagine glycan. A helical membrane pass occupies residues 38–60; the sequence is AMLLTLLIFVIVFGNVLVCMAVS. Over 61 to 70 the chain is Cytoplasmic; sequence REKALQTTTN. Residues 71–93 form a helical membrane-spanning segment; sequence YLIVSLAVADLLVATLVMPWVVY. At 94-108 the chain is on the extracellular side; the sequence is LEVVGEWKFSRIHCD. C107 and C182 are joined by a disulfide. A helical transmembrane segment spans residues 109-130; that stretch reads IFVTLDVMMCTASILNLCAISI. Residues 131–151 lie on the Cytoplasmic side of the membrane; the sequence is DRYTAVAMPMLYNTRYSSKRR. A helical transmembrane segment spans residues 152-172; the sequence is VTVMIAIVWVLSFTISCPMLF. The Extracellular portion of the chain corresponds to 173–188; the sequence is GLNNTDQNECIIANPA. The chain crosses the membrane as a helical span at residues 189-213; it reads FVVYSSIVSFYVPFIVTLLVYIKIY. An interaction with PPP1R9B region spans residues 211–374; sequence KIYIVLRRRR…SQQKEKKATQ (164 aa). The Cytoplasmic segment spans residues 214-374; the sequence is IVLRRRRKRV…SQQKEKKATQ (161 aa). The interval 281-332 is disordered; sequence MEMLSSTSPPERTRYSPIPPSHHQLTLPDPSHHGLHSTPDSPAKPEKNGHAK. Residues 375–396 traverse the membrane as a helical segment; it reads MLAIVLGVFIICWLPFFITHIL. Residues 397–410 are Extracellular-facing; that stretch reads NIHCDCNIPPVLYS. Residues C400 and C402 are joined by a disulfide bond. Residues 411-432 traverse the membrane as a helical segment; sequence AFTWLGYVNSAVNPIIYTTFNI. At 433 to 444 the chain is on the cytoplasmic side; sequence EFRKAFLKILHC. The S-palmitoyl cysteine moiety is linked to residue C444.

This sequence belongs to the G-protein coupled receptor 1 family. In terms of assembly, forms homo- and heterooligomers with DRD4. The interaction with DRD4 may modulate agonist-induced downstream signaling. Interacts with CADPS and CADPS2. Interacts with GPRASP1, PPP1R9B and CLIC6. Interacts with ARRB2. Interacts with HTR2A. Interacts with DRD1. Interacts with KCNA2. Palmitoylated. Palmitoylation which is required for proper localization to the plasma membrane and stability of the receptor could be carried on by ZDHHC4, ZDHHC3 and ZDHHC8.

Its subcellular location is the cell membrane. The protein resides in the golgi apparatus membrane. In terms of biological role, dopamine receptor whose activity is mediated by G proteins which inhibit adenylyl cyclase. Positively regulates postnatal regression of retinal hyaloid vessels via suppression of VEGFR2/KDR activity, downstream of OPN5. This chain is D(2) dopamine receptor (DRD2), found in Bos taurus (Bovine).